The sequence spans 325 residues: Cytochrome c1, heme protein, mitochondrial (325 aa).

The transit peptide at 1–84 directs the protein to the mitochondrion; it reads MAAAAASLRR…AVALHSAVSA (84 aa). Topologically, residues 85–287 are mitochondrial intermembrane; that stretch reads SDLELHPPSY…SEPEHDHRKR (203 aa). The region spanning 108–209 is the Cytochrome c domain; that stretch reads TSIRRGFQVY…IVRARHGGED (102 aa). Residues Cys121, Cys124, His125, and Met244 each contribute to the heme c site. A helical membrane pass occupies residues 288–308; it reads MGLKMLLMMGLLLPLTYAMKR. Over 309–325 the chain is Mitochondrial matrix; sequence HKWSVLKSRKLAYRPPK.

It belongs to the cytochrome c family. Component of the ubiquinol-cytochrome c oxidoreductase (cytochrome b-c1 complex, complex III, CIII), a multisubunit enzyme composed of 11 subunits. The complex is composed of 3 respiratory subunits cytochrome b, cytochrome c1 and Rieske protein UQCRFS1, 2 core protein subunits UQCRC1/QCR1 and UQCRC2/QCR2, and 6 low-molecular weight protein subunits UQCRH/QCR6, UQCRB/QCR7, UQCRQ/QCR8, UQCR10/QCR9, UQCR11/QCR10 and subunit 9, the cleavage product of Rieske protein UQCRFS1. The complex exists as an obligatory dimer and forms supercomplexes (SCs) in the inner mitochondrial membrane with NADH-ubiquinone oxidoreductase (complex I, CI) and cytochrome c oxidase (complex IV, CIV), resulting in different assemblies (supercomplex SCI(1)III(2)IV(1) and megacomplex MCI(2)III(2)IV(2)). Interacts with FLVCR2; this interaction occurs in the absence of heme and is disrupted upon heme binding. It depends on heme c as a cofactor.

It is found in the mitochondrion inner membrane. It carries out the reaction a quinol + 2 Fe(III)-[cytochrome c](out) = a quinone + 2 Fe(II)-[cytochrome c](out) + 2 H(+)(out). Functionally, component of the ubiquinol-cytochrome c oxidoreductase, a multisubunit transmembrane complex that is part of the mitochondrial electron transport chain which drives oxidative phosphorylation. The respiratory chain contains 3 multisubunit complexes succinate dehydrogenase (complex II, CII), ubiquinol-cytochrome c oxidoreductase (cytochrome b-c1 complex, complex III, CIII) and cytochrome c oxidase (complex IV, CIV), that cooperate to transfer electrons derived from NADH and succinate to molecular oxygen, creating an electrochemical gradient over the inner membrane that drives transmembrane transport and the ATP synthase. The cytochrome b-c1 complex catalyzes electron transfer from ubiquinol to cytochrome c, linking this redox reaction to translocation of protons across the mitochondrial inner membrane, with protons being carried across the membrane as hydrogens on the quinol. In the process called Q cycle, 2 protons are consumed from the matrix, 4 protons are released into the intermembrane space and 2 electrons are passed to cytochrome c. Cytochrome c1 is a catalytic core subunit containing a c-type heme. It transfers electrons from the [2Fe-2S] iron-sulfur cluster of the Rieske protein to cytochrome c. The protein is Cytochrome c1, heme protein, mitochondrial (Cyc1) of Mus musculus (Mouse).